The sequence spans 426 residues: Fatty alcohol:caffeoyl-CoA acyltransferase (426 aa).

Residues histidine 162 and aspartate 374 each act as proton acceptor in the active site.

The protein belongs to the plant acyltransferase family. As to expression, expressed in the outermost circumference of mature roots, the endodermis of young roots and in the seed coat of developing seeds. Expressed in outer integument layer 1 of the seed coat.

In terms of biological role, involved in the synthesis of alkyl hydroxycinnamates in root waxes. Functions as a fatty alcohol:hydroxy cinnamoyl-CoA acyltransferase with apparent preference for caffeoyl-CoA. This is Fatty alcohol:caffeoyl-CoA acyltransferase from Arabidopsis thaliana (Mouse-ear cress).